Consider the following 1175-residue polypeptide: DNA-directed RNA polymerase subunit beta (1175 aa).

The interval 1 to 24 (MEGSLLVASSASNNETANNVESTD) is disordered. A compositionally biased stretch (low complexity) spans 7–23 (VASSASNNETANNVEST).

This sequence belongs to the RNA polymerase beta chain family. As to quaternary structure, the RNAP catalytic core consists of 2 alpha, 1 beta, 1 beta' and 1 omega subunit. When a sigma factor is associated with the core the holoenzyme is formed, which can initiate transcription.

It catalyses the reaction RNA(n) + a ribonucleoside 5'-triphosphate = RNA(n+1) + diphosphate. Functionally, DNA-dependent RNA polymerase catalyzes the transcription of DNA into RNA using the four ribonucleoside triphosphates as substrates. This Renibacterium salmoninarum (strain ATCC 33209 / DSM 20767 / JCM 11484 / NBRC 15589 / NCIMB 2235) protein is DNA-directed RNA polymerase subunit beta.